The sequence spans 230 residues: 5'-methylthioadenosine/S-adenosylhomocysteine nucleosidase (230 aa).

Glutamate 12 (proton acceptor) is an active-site residue. Substrate contacts are provided by residues glycine 78, isoleucine 153, and 174–175 (ME). Aspartate 198 acts as the Proton donor in catalysis.

It belongs to the PNP/UDP phosphorylase family. MtnN subfamily.

The catalysed reaction is S-adenosyl-L-homocysteine + H2O = S-(5-deoxy-D-ribos-5-yl)-L-homocysteine + adenine. The enzyme catalyses S-methyl-5'-thioadenosine + H2O = 5-(methylsulfanyl)-D-ribose + adenine. It catalyses the reaction 5'-deoxyadenosine + H2O = 5-deoxy-D-ribose + adenine. It functions in the pathway amino-acid biosynthesis; L-methionine biosynthesis via salvage pathway; S-methyl-5-thio-alpha-D-ribose 1-phosphate from S-methyl-5'-thioadenosine (hydrolase route): step 1/2. Its function is as follows. Catalyzes the irreversible cleavage of the glycosidic bond in both 5'-methylthioadenosine (MTA) and S-adenosylhomocysteine (SAH/AdoHcy) to adenine and the corresponding thioribose, 5'-methylthioribose and S-ribosylhomocysteine, respectively. Also cleaves 5'-deoxyadenosine, a toxic by-product of radical S-adenosylmethionine (SAM) enzymes, into 5-deoxyribose and adenine. This chain is 5'-methylthioadenosine/S-adenosylhomocysteine nucleosidase, found in Shewanella denitrificans (strain OS217 / ATCC BAA-1090 / DSM 15013).